The primary structure comprises 350 residues: Serine/threonine-protein kinase SRK2F (350 aa).

In terms of domain architecture, Protein kinase spans Tyr4 to Phe260. Residues Leu10–Ala18 and Lys33 each bind ATP. Asp123 (proton acceptor) is an active-site residue. A coiled-coil region spans residues Glu270–Arg303.

Belongs to the protein kinase superfamily. Ser/Thr protein kinase family. In terms of tissue distribution, expressed in seedlings.

The catalysed reaction is L-seryl-[protein] + ATP = O-phospho-L-seryl-[protein] + ADP + H(+). It catalyses the reaction L-threonyl-[protein] + ATP = O-phospho-L-threonyl-[protein] + ADP + H(+). This chain is Serine/threonine-protein kinase SRK2F (SRK2F), found in Arabidopsis thaliana (Mouse-ear cress).